The chain runs to 297 residues: Acetaldehyde dehydrogenase (297 aa).

15–18 (SGSI) serves as a coordination point for NAD(+). Cys130 acts as the Acyl-thioester intermediate in catalysis. Residues 162 to 170 (SAGIATREN) and Asn272 contribute to the NAD(+) site.

The protein belongs to the acetaldehyde dehydrogenase family.

It catalyses the reaction acetaldehyde + NAD(+) + CoA = acetyl-CoA + NADH + H(+). In Burkholderia pseudomallei (strain 1106a), this protein is Acetaldehyde dehydrogenase.